A 124-amino-acid chain; its full sequence is Large ribosomal subunit protein bL21 (124 aa).

It belongs to the bacterial ribosomal protein bL21 family. In terms of assembly, part of the 50S ribosomal subunit. Contacts protein L20.

Functionally, this protein binds to 23S rRNA in the presence of protein L20. This chain is Large ribosomal subunit protein bL21, found in Sinorhizobium medicae (strain WSM419) (Ensifer medicae).